Here is a 361-residue protein sequence, read N- to C-terminus: Histidinol-phosphate aminotransferase (361 aa).

Residues 26–45 (GMDPEDLTKLSSNENPHGPS) are disordered. Lysine 222 bears the N6-(pyridoxal phosphate)lysine mark.

It belongs to the class-II pyridoxal-phosphate-dependent aminotransferase family. Histidinol-phosphate aminotransferase subfamily. The cofactor is pyridoxal 5'-phosphate.

It catalyses the reaction L-histidinol phosphate + 2-oxoglutarate = 3-(imidazol-4-yl)-2-oxopropyl phosphate + L-glutamate. The protein operates within amino-acid biosynthesis; L-histidine biosynthesis; L-histidine from 5-phospho-alpha-D-ribose 1-diphosphate: step 7/9. The protein is Histidinol-phosphate aminotransferase (hisC) of Haloferax volcanii (strain ATCC 29605 / DSM 3757 / JCM 8879 / NBRC 14742 / NCIMB 2012 / VKM B-1768 / DS2) (Halobacterium volcanii).